The primary structure comprises 391 residues: 3-ketoacyl-CoA thiolase (391 aa).

Residue Cys-95 is the Acyl-thioester intermediate of the active site. Active-site proton acceptor residues include His-347 and Cys-377.

The protein belongs to the thiolase-like superfamily. Thiolase family. In terms of assembly, heterotetramer of two alpha chains (FadB) and two beta chains (FadA).

The protein localises to the cytoplasm. The enzyme catalyses an acyl-CoA + acetyl-CoA = a 3-oxoacyl-CoA + CoA. Its pathway is lipid metabolism; fatty acid beta-oxidation. Its function is as follows. Catalyzes the final step of fatty acid oxidation in which acetyl-CoA is released and the CoA ester of a fatty acid two carbons shorter is formed. This Stutzerimonas stutzeri (strain A1501) (Pseudomonas stutzeri) protein is 3-ketoacyl-CoA thiolase.